The chain runs to 894 residues: Mitogen-activated protein kinase kinase kinase kinase 3 (894 aa).

Met-1 carries the post-translational modification N-acetylmethionine. Residues 16-273 (FELIQRIGSG…AEKLLQHPFV (258 aa)) form the Protein kinase domain. Residues 22-30 (IGSGTYGDV), Lys-45, and Lys-48 each bind ATP. Residue Asp-136 is the Proton acceptor of the active site. Ser-329 and Ser-398 each carry phosphoserine. A disordered region spans residues 410 to 536 (AHLEDDEGDD…DVPKPISNGL (127 aa)). A compositionally biased stretch (pro residues) spans 473 to 487 (QVPPRPPPPRLPPHK). Over residues 513–529 (NEHRGTNLSRKEKKDVP) the composition is skewed to basic and acidic residues. The CNH domain occupies 556–867 (PLKIHCASSW…IFRLLGSDRV (312 aa)).

Belongs to the protein kinase superfamily. STE Ser/Thr protein kinase family. STE20 subfamily. As to quaternary structure, interacts with SH3GL2. Interaction appears to regulate MAP4K3-mediated JNK activation. The cofactor is Mg(2+). As to expression, ubiquitously expressed in all tissues examined, with high levels in heart, brain, placenta, skeletal muscle, kidney and pancreas and lower levels in lung and liver.

The catalysed reaction is L-seryl-[protein] + ATP = O-phospho-L-seryl-[protein] + ADP + H(+). The enzyme catalyses L-threonyl-[protein] + ATP = O-phospho-L-threonyl-[protein] + ADP + H(+). In terms of biological role, serine/threonine kinase that plays a role in the response to environmental stress. Appears to act upstream of the JUN N-terminal pathway. Activator of the Hippo signaling pathway which plays a pivotal role in organ size control and tumor suppression by restricting proliferation and promoting apoptosis. MAP4Ks act in parallel to and are partially redundant with STK3/MST2 and STK4/MST2 in the phosphorylation and activation of LATS1/2, and establish MAP4Ks as components of the expanded Hippo pathway. The chain is Mitogen-activated protein kinase kinase kinase kinase 3 from Homo sapiens (Human).